The following is a 78-amino-acid chain: Omega-conotoxin PnVIA (78 aa).

The signal sequence occupies residues 1-22; that stretch reads MKLTCMMIIAVLFLTAWTFVMA. A propeptide spanning residues 23–45 is cleaved from the precursor; it reads DDPRDEPEARDEMNPAASKLNER. Intrachain disulfides connect cysteine 47/cysteine 65, cysteine 54/cysteine 69, and cysteine 64/cysteine 73. Position 76 is a glutamine amide (glutamine 76).

As to expression, expressed by the venom duct.

The protein resides in the secreted. Its function is as follows. Omega-conotoxins act at presynaptic membranes, they bind and block voltage-gated calcium channels (Cav). Acts on high voltage-activated (HVA) calcium currents in molluscan neurons. This chain is Omega-conotoxin PnVIA, found in Conus pennaceus (Feathered cone).